The following is a 579-amino-acid chain: Adipocyte plasma membrane-associated protein Hemomucin (579 aa).

The Cytoplasmic segment spans residues 1-6 (MGLLYA). Residues 7–29 (LRVRIMNFMIFFLLIILMPGLPP) traverse the membrane as a helical segment. The Extracellular portion of the chain corresponds to 30-579 (RTTFPFKDYI…INKQGVNVEL (550 aa)). Asn-213 and Asn-217 each carry an N-linked (GlcNAc...) asparagine glycan. The segment at 427 to 579 (GLEASIGVPP…INKQGVNVEL (153 aa)) is disordered. A compositionally biased stretch (low complexity) spans 435 to 529 (PPSKATPKPK…PKPTTTTTPT (95 aa)).

It belongs to the strictosidine synthase family. Interacts with sturkopf. Post-translationally, O-glycosylated. Glycosylated in the ovary of 4 day old females. Phosphorylated. Detected in ovaries (at protein level). In larvae, detected in the fat body, salivary glands, imaginal disks and gut (at protein level). In adults, expressed in the cardia, and in regions of the ventriculus including the area posterior to the cardia. In females also expressed in follicle cells.

Its subcellular location is the cell membrane. Transmembrane mucin that may be involved in cellular adhesion and the innate immune response. Membrane-tethered mucins are involved in many cell surface functions and form a physical barrier around cells to regulate cell-cell and/or cell-substrate interactions, and protect against pathogens or harmful extracellular conditions. This mucin likely acts in hemocyte adhesion as it is released from hemocytes during coagulation and is also able to bind lipophorin particles which form part of the hemocyte coagulogen. Able to induce expression of the antibacterial proteins in the presence of GalNAc-specific lectins and so probably also functions in the innate immune response. The polypeptide is Adipocyte plasma membrane-associated protein Hemomucin (Drosophila melanogaster (Fruit fly)).